Here is a 473-residue protein sequence, read N- to C-terminus: Tryptophanase (473 aa).

N6-(pyridoxal phosphate)lysine is present on lysine 270.

This sequence belongs to the beta-eliminating lyase family. As to quaternary structure, homotetramer. The cofactor is pyridoxal 5'-phosphate.

It carries out the reaction L-tryptophan + H2O = indole + pyruvate + NH4(+). Its pathway is amino-acid degradation; L-tryptophan degradation via pyruvate pathway; indole and pyruvate from L-tryptophan: step 1/1. The sequence is that of Tryptophanase from Vibrio vulnificus (strain CMCP6).